The following is a 304-amino-acid chain: uncharacterized protein (304 aa).

Over residues 1–10 the composition is skewed to basic residues; sequence MLWAHRKKRK. Residues 1-28 are disordered; that stretch reads MLWAHRKKRKAATETTEDKPLESHRAND. Basic and acidic residues predominate over residues 16 to 27; it reads TEDKPLESHRAN. S39 bears the Phosphoserine mark. Over residues 91 to 101 the composition is skewed to polar residues; that stretch reads KQKISGSSMTK. Disordered regions lie at residues 91 to 115, 138 to 160, and 190 to 304; these read KQKI…SMED, SMLQ…ISPE, and SHTV…IYGS. The segment covering 151–160 has biased composition (basic and acidic residues); sequence HAESRNISPE. Residue S158 is modified to Phosphoserine. The span at 195-206 shows a compositional bias: low complexity; it reads SQSRHSNQSHHS. Over residues 208–223 the composition is skewed to polar residues; sequence PSHQSNQSHPVYSSYQ. A compositionally biased stretch (low complexity) spans 229–248; that stretch reads HLSPQSYPSYSSHQSHPGHS. The span at 249–263 shows a compositional bias: polar residues; that stretch reads NHQGHSGLSSHQTHL. Over residues 264–292 the composition is skewed to low complexity; it reads GHSNHQGHPGHSSHQSHQGQPGHPSHQSH.

This is an uncharacterized protein from Mus musculus (Mouse).